A 388-amino-acid chain; its full sequence is Protein DVU_0534 (388 aa).

The next 10 membrane-spanning stretches (helical) occupy residues 10 to 31 (LMTP…LTVL), 57 to 78 (LLCG…YLFG), 89 to 106 (AITT…ALNY), 130 to 144 (EVGL…VLFV), 166 to 191 (LTLV…LFLI), 199 to 222 (LWYS…SMVI), 254 to 265 (AASFVLAGYFMI), 291 to 306 (MLGF…ALGV), 316 to 328 (FASV…IVMN), and 354 to 368 (IGIS…ITVY).

It belongs to the NrfD family.

It is found in the cell membrane. HMWC (high-molecular-weight cytochrome c), ORF2, ORF3, ORF4, ORF5 and ORF6 in the HMC operon form a transmembrane protein complex that allows electron flow from the periplasmic hydrogenase to the cytoplasmic enzymes that catalyze reduction of sulfates. The chain is Protein DVU_0534 from Nitratidesulfovibrio vulgaris (strain ATCC 29579 / DSM 644 / CCUG 34227 / NCIMB 8303 / VKM B-1760 / Hildenborough) (Desulfovibrio vulgaris).